We begin with the raw amino-acid sequence, 5255 residues long: Bacitracin synthase 1 (5255 aa).

The interval leucine 39–alanine 612 is domain 1 (isoleucine-activating). The segment covering valine 519–alanine 531 has biased composition (basic and acidic residues). The segment at valine 519–asparagine 542 is disordered. In terms of domain architecture, Carrier 1 spans alanine 539 to histidine 614. Serine 574 carries the post-translational modification O-(pantetheine 4'-phosphoryl)serine. Positions threonine 621–phenylalanine 1037 are cyclization. Residues histidine 1109–aspartate 1648 are domain 2 (cysteine-activating). 4 Carrier domains span residues leucine 1580 to glutamate 1655, alanine 2616 to arginine 2691, proline 3659 to threonine 3733, and alanine 5166 to glutamate 5241. O-(pantetheine 4'-phosphoryl)serine occurs at positions 1615, 2651, 3694, and 5201. The domain 3 (leucine-activating) stretch occupies residues glycine 2124 to arginine 2689. Positions aspartate 3164–glutamate 3732 are domain 4 (glutamine-activating). The interval leucine 4668–glutamate 5249 is domain 5 (isoleucine-activating).

The protein belongs to the ATP-dependent AMP-binding enzyme family. Large multienzyme complex of BA1, BA2 and BA3. The cofactor is pantetheine 4'-phosphate.

The enzyme catalyses L-glutamate = D-glutamate. The protein operates within antibiotic biosynthesis; bacitracin biosynthesis. In terms of biological role, activates five amino acids, incorporates two D-amino acids, releases and cyclizes the mature bacitracin. The sequence is that of Bacitracin synthase 1 (bacA) from Bacillus licheniformis.